Reading from the N-terminus, the 347-residue chain is Protein RecA (347 aa).

ATP is bound at residue 70–77 (GPESSGKT).

Belongs to the RecA family.

It is found in the cytoplasm. Can catalyze the hydrolysis of ATP in the presence of single-stranded DNA, the ATP-dependent uptake of single-stranded DNA by duplex DNA, and the ATP-dependent hybridization of homologous single-stranded DNAs. It interacts with LexA causing its activation and leading to its autocatalytic cleavage. This Ruegeria pomeroyi (strain ATCC 700808 / DSM 15171 / DSS-3) (Silicibacter pomeroyi) protein is Protein RecA.